We begin with the raw amino-acid sequence, 131 residues long: Interleukin-13 (131 aa).

The N-terminal stretch at 1-18 is a signal peptide; that stretch reads MALWVTAVLALACLGGLA. Residues Asn42, Asn53, Asn76, and Asn121 are each glycosylated (N-linked (GlcNAc...) asparagine). 2 disulfides stabilise this stretch: Cys52–Cys80 and Cys68–Cys94.

It belongs to the IL-4/IL-13 family. In terms of assembly, interacts with IL13RA2.

It is found in the secreted. Its function is as follows. Cytokine that plays important roles in allergic inflammation and immune response to parasite infection. Synergizes with IL2 in regulating interferon-gamma synthesis. Stimulates B-cell proliferation, and activation of eosinophils, basophils, and mast cells. Plays an important role in controlling IL33 activity by modulating the production of transmembrane and soluble forms of interleukin-1 receptor-like 1/IL1RL1. Displays the capacity to antagonize Th1-driven proinflammatory immune response and downregulates synthesis of many proinflammatory cytokines including IL1, IL6, IL10, IL12 and TNF-alpha through a mechanism that partially involves suppression of NF-kappa-B. Also functions on nonhematopoietic cells, including endothelial cells where it induces vascular cell adhesion protein 1/VCAM1, which is important in the recruitment of eosinophils. Exerts its biological effects through its receptors which comprises the IL4R chain and the IL13RA1 chain, to activate JAK1 and TYK2, leading to the activation of STAT6. Aside from IL13RA1, another receptor IL13RA2 acts as a high affinity decoy for IL13 and mediates internalization and depletion of extracellular IL13. This is Interleukin-13 (Il13) from Rattus norvegicus (Rat).